The following is a 297-amino-acid chain: uncharacterized protein (297 aa).

Residue E46 is part of the active site.

It belongs to the PhzF family. Homodimer and homotetramer.

This is an uncharacterized protein from Salmonella typhimurium (strain LT2 / SGSC1412 / ATCC 700720).